Reading from the N-terminus, the 266-residue chain is PDZ domain-containing protein 9 (266 aa).

The PDZ domain occupies K27–R109.

The polypeptide is PDZ domain-containing protein 9 (Pdzd9) (Mus musculus (Mouse)).